Reading from the N-terminus, the 944-residue chain is Breast cancer type 2 susceptibility protein homolog (944 aa).

Composition is skewed to basic and acidic residues over residues 325 to 348 (KKVK…ESKI) and 415 to 431 (NSIK…ETPN). Disordered stretches follow at residues 325 to 354 (KKVK…ASCD) and 415 to 440 (NSIK…SSHQ). BRCA2 repeat units lie at residues 543 to 577 (AEPE…EFQS), 644 to 678 (NESQ…QSRA), and 719 to 753 (SETE…EFQA). 2 disordered regions span residues 823-854 (LCSQ…LDQA) and 876-944 (SSTE…RSRY). Composition is skewed to polar residues over residues 838-852 (IHSS…SPLD) and 876-885 (SSTETSTSCA). The span at 904–921 (ADRDLNRSKDCAKNRQDA) shows a compositional bias: basic and acidic residues. Positions 932-944 (KKSRRLGLSRSRY) are enriched in basic residues.

In terms of assembly, interacts with Rad9 and spn-A/Rad51.

It is found in the nucleus. Functionally, involved in and required for double-strand break repair by meiotic and mitotic homologous recombination. During meiosis, has a dual role in the repair of meiotic double-stranded breaks and the efficient activation of the meiotic recombination checkpoint. This Drosophila simulans (Fruit fly) protein is Breast cancer type 2 susceptibility protein homolog.